The chain runs to 492 residues: N-succinylglutamate 5-semialdehyde dehydrogenase (492 aa).

Residue 220–225 (GSAGTG) participates in NAD(+) binding. Active-site residues include glutamate 243 and cysteine 277.

This sequence belongs to the aldehyde dehydrogenase family. AstD subfamily.

The enzyme catalyses N-succinyl-L-glutamate 5-semialdehyde + NAD(+) + H2O = N-succinyl-L-glutamate + NADH + 2 H(+). The protein operates within amino-acid degradation; L-arginine degradation via AST pathway; L-glutamate and succinate from L-arginine: step 4/5. Catalyzes the NAD-dependent reduction of succinylglutamate semialdehyde into succinylglutamate. The protein is N-succinylglutamate 5-semialdehyde dehydrogenase of Cronobacter sakazakii (strain ATCC BAA-894) (Enterobacter sakazakii).